The sequence spans 399 residues: Yellow-related salivary protein M10 (399 aa).

Positions 1–18 (MKFILSVLALASFQHVFC) are cleaved as a signal peptide. Asn29 and Asn83 each carry an N-linked (GlcNAc...) asparagine glycan.

Belongs to the major royal jelly protein family. In terms of tissue distribution, salivary gland (at protein level).

The protein resides in the secreted. Probably modulates blood feeding of sand flies on vertebrate species by binding and sequestering different mediators involved in the host response. Functions as a chemoattractant for host neutrophils; likely acts through a G-protein-coupled receptor and effect is dependent on calcium influx and phosphatidylinositol 3-kinases (PI3K) activity. Functionally, (Microbial infection) Probably enhances infection caused by Leishmania species in the host through augmentation of host neutrophil recruitment into the skin. In Phlebotomus duboscqi (Sandfly), this protein is Yellow-related salivary protein M10.